The primary structure comprises 197 residues: Phosphoheptose isomerase (197 aa).

The region spanning Met-37–Met-197 is the SIS domain. Asn-52–Gly-54 is a binding site for substrate. 2 residues coordinate Zn(2+): His-61 and Glu-65. Substrate-binding positions include Glu-65, Asn-94–Asp-95, Ser-120–Ser-122, Ser-125, and Gln-175. Zn(2+) contacts are provided by Gln-175 and His-183.

The protein belongs to the SIS family. GmhA subfamily. Homotetramer. Zn(2+) is required as a cofactor.

It localises to the cytoplasm. It catalyses the reaction 2 D-sedoheptulose 7-phosphate = D-glycero-alpha-D-manno-heptose 7-phosphate + D-glycero-beta-D-manno-heptose 7-phosphate. The protein operates within carbohydrate biosynthesis; D-glycero-D-manno-heptose 7-phosphate biosynthesis; D-glycero-alpha-D-manno-heptose 7-phosphate and D-glycero-beta-D-manno-heptose 7-phosphate from sedoheptulose 7-phosphate: step 1/1. Functionally, catalyzes the isomerization of sedoheptulose 7-phosphate in D-glycero-D-manno-heptose 7-phosphate. This Neisseria meningitidis serogroup C (strain 053442) protein is Phosphoheptose isomerase.